The following is a 2197-amino-acid chain: RNA1 polyprotein (2197 aa).

Over 621–1167 (GLTDVFGVPL…YDWVYANGGK (547 aa)) the chain is Cytoplasmic. Residues 766–933 (VKRLSDLHKR…EGVAYNPSDP (168 aa)) form the SF3 helicase domain. 796–803 (GGPRCGKS) contributes to the ATP binding site. The helical transmembrane segment at 1168 to 1188 (LLLVLAAVILILFFGSACIKL) threads the bilayer. Residues 1189-1212 (MQAIFCGAAGGTVSMAAVGKMTVQ) lie on the Lumenal side of the membrane. Asn1228 carries an N-linked (GlcNAc...) asparagine; by host glycan. Positions 1243–1475 (LAEAQFNESH…MPRYISHASF (233 aa)) constitute a Peptidase C3 domain. Active-site for picornain 3C-like protease activity residues include His1283, Glu1331, and Cys1433. The region spanning 1765-1888 (SVALNCDYSR…SIKPDTMKYF (124 aa)) is the RdRp catalytic domain.

It belongs to the nepoviruses RNA1 polyprotein family. Post-translationally, specific enzymatic cleavages by picornain 3C-like protease in vivo yield mature proteins. Picornain 3C-like protease is autocatalytically processed. NTB exists as NTB-VPg polyprotein as well as NTB mature protein. In terms of processing, VPg is uridylylated by the polymerase and is covalently linked to the 5'-end of genomic RNA. This uridylylated form acts as a nucleotide-peptide primer for the polymerase.

Its subcellular location is the host endoplasmic reticulum lumen. It is found in the host endoplasmic reticulum membrane. It carries out the reaction RNA(n) + a ribonucleoside 5'-triphosphate = RNA(n+1) + diphosphate. Functionally, picornain 3C-like protease is a thiol protease that cleaves at Gln-|-Gly or Gln-|-Ser sites in the P1 and P2 polyproteins. Its function is as follows. The VPg-NTB polyprotein may act as a membrane-anchor for the replication complex. The sequence is that of RNA1 polyprotein from Tomato ringspot virus (isolate raspberry) (ToRSV).